We begin with the raw amino-acid sequence, 307 residues long: GTPase Era (307 aa).

The 170-residue stretch at 17–186 folds into the Era-type G domain; it reads RCGFVAIVGR…LELIKPYLPE (170 aa). A G1 region spans residues 25–32; it reads GRPNVGKS. 25 to 32 contacts GTP; that stretch reads GRPNVGKS. Residues 51-55 form a G2 region; it reads QTTRN. The G3 stretch occupies residues 72-75; sequence DTPG. Residues 72 to 76 and 133 to 136 contribute to the GTP site; these read DTPGF and NKID. A G4 region spans residues 133–136; the sequence is NKID. The tract at residues 165-167 is G5; it reads VSA. In terms of domain architecture, KH type-2 spans 217–293; sequence LGEELPYAMN…FLKVWVKVKS (77 aa).

Belongs to the TRAFAC class TrmE-Era-EngA-EngB-Septin-like GTPase superfamily. Era GTPase family. As to quaternary structure, monomer.

The protein resides in the cytoplasm. The protein localises to the cell inner membrane. An essential GTPase that binds both GDP and GTP, with rapid nucleotide exchange. Plays a role in 16S rRNA processing and 30S ribosomal subunit biogenesis and possibly also in cell cycle regulation and energy metabolism. The protein is GTPase Era of Neisseria meningitidis serogroup B (strain ATCC BAA-335 / MC58).